We begin with the raw amino-acid sequence, 642 residues long: Sodium-dependent phosphate transport protein 2A (642 aa).

Residues 1 to 106 are Cytoplasmic-facing; it reads MISYGEQLSS…LRRTAMTLLK (106 aa). Residues Ser14 and Ser37 each carry the phosphoserine modification. Residues 107-128 traverse the membrane as a helical segment; sequence LPLMVTFLYLFVCSLDVLSSAF. The Extracellular portion of the chain corresponds to 129–148; the sequence is QLAGGKVAGDIFKDNAILAN. Residues 149–166 form a helical membrane-spanning segment; it reads PVAGLVVGILVTVLVQSS. Residues 167–168 lie on the Cytoplasmic side of the membrane; that stretch reads ST. The chain crosses the membrane as a helical span at residues 169-188; it reads ATSIIVSMVSSGLLEVSSAI. Topologically, residues 189-350 are extracellular; the sequence is PIIMGSNIGT…HIFVDTQLPD (162 aa). Intrachain disulfides connect Cys228-Cys525 and Cys309-Cys339. N-linked (GlcNAc...) asparagine glycans are attached at residues Asn301, Asn326, and Asn333. A helical transmembrane segment spans residues 351-373; the sequence is LAVGLILLAGSLVLLCTCLILLV. Over 374 to 415 the chain is Cytoplasmic; the sequence is KMLNSLLKGQVAKVIQKVINTDLPAPFTWVTGYFAMVVGAAM. The helical transmembrane segment at 416 to 439 threads the bilayer; sequence TFIVQSSSVFTSAITPLVGLGVIS. At 440–469 the chain is on the extracellular side; sequence IERAYPLTLGSNIGTTTTAILAALASPREK. A helical transmembrane segment spans residues 470 to 490; it reads LSSSFQIALCHFFFNISGILL. Topologically, residues 491–516 are cytoplasmic; sequence WYPLPCTRLPIRMAKALGKRTAKYRW. Thr511 is modified (phosphothreonine; by PKC). The helical transmembrane segment at 517–537 threads the bilayer; sequence FAVLYLLVCFLLLPSLVFGIS. The Extracellular portion of the chain corresponds to 538–542; sequence MAGWR. The chain crosses the membrane as a helical span at residues 543–564; sequence AMVGVGAPFGALLAFVVLINVL. The Cytoplasmic segment spans residues 565-642; sequence QSRSPGRLPK…LPAHHNATRL (78 aa). Position 610 is a phosphoserine (Ser610). Thr626 bears the Phosphothreonine mark. Ser628 is modified (phosphoserine).

This sequence belongs to the SLC34A transporter family. Interacts via its C-terminal region with NHERF4. Interacts with NHERF1. Interacts with TMEM174; regulates SLC34A1 internalization by PTH and FGF23. In terms of tissue distribution, expressed in the kidney cortex.

Its subcellular location is the apical cell membrane. The protein localises to the cell membrane. It carries out the reaction 3 Na(+)(out) + phosphate(out) = 3 Na(+)(in) + phosphate(in). Transport activity is significantly increased in response to dietary phosphate deprivation. In terms of biological role, involved in actively transporting phosphate into cells via Na(+) cotransport in the renal brush border membrane. The cotransport has a Na(+):Pi stoichiometry of 3:1 and is electrogenic. The sequence is that of Sodium-dependent phosphate transport protein 2A from Oryctolagus cuniculus (Rabbit).